The following is a 153-amino-acid chain: Peptide deformylase (153 aa).

Cys87 and His129 together coordinate Fe cation. The active site involves Glu130. Residue His133 participates in Fe cation binding.

It belongs to the polypeptide deformylase family. Fe(2+) is required as a cofactor.

It carries out the reaction N-terminal N-formyl-L-methionyl-[peptide] + H2O = N-terminal L-methionyl-[peptide] + formate. Functionally, removes the formyl group from the N-terminal Met of newly synthesized proteins. Requires at least a dipeptide for an efficient rate of reaction. N-terminal L-methionine is a prerequisite for activity but the enzyme has broad specificity at other positions. The sequence is that of Peptide deformylase from Dictyoglomus turgidum (strain DSM 6724 / Z-1310).